The following is a 547-amino-acid chain: Phosphatidylinositol/phosphatidylcholine transfer protein SFH7 (547 aa).

The CRAL-TRIO domain occupies Glu130–Asp304. The stretch at Ser464–Asn526 forms a coiled coil.

It belongs to the SFH family.

It is found in the golgi apparatus membrane. The protein resides in the cell membrane. Required for transport of secretory proteins from the Golgi complex. Catalyzes the transfer of phosphatidylinositol and phosphatidylcholine between membranes in vitro. The sequence is that of Phosphatidylinositol/phosphatidylcholine transfer protein SFH7 (SFH7) from Arabidopsis thaliana (Mouse-ear cress).